The primary structure comprises 181 residues: Malignant T-cell-amplified sequence 1-B (181 aa).

Residues 92 to 171 (LPHQQVDKGA…IGIENIHYLN (80 aa)) form the PUA domain.

This sequence belongs to the MCTS1 family.

The protein localises to the cytoplasm. Plays a role as translation enhancer and involved in cell cycle regulation. The polypeptide is Malignant T-cell-amplified sequence 1-B (mcts1-b) (Xenopus laevis (African clawed frog)).